The following is a 164-amino-acid chain: Sperm axonemal maintenance protein CFAP97D1 (164 aa).

Residues 61-88 (LSKIQGEQKRIDKIEYENRQLCQKIANA) adopt a coiled-coil conformation.

The protein belongs to the CFAP97 family. In terms of tissue distribution, expressed exclusively in testis.

In terms of biological role, required for male fertility through its role in axonemal doublet stabilization which is essential for sperm motility and fertilization. This is Sperm axonemal maintenance protein CFAP97D1 (Cfap97d1) from Mus musculus (Mouse).